The primary structure comprises 218 residues: Large ribosomal subunit protein uL4 (218 aa).

The disordered stretch occupies residues 46–100; sequence ARQGTHSTKTRAEVRGGGRKPFRQKGTGRARQGSIRAPHFTGGGISHGPKPRDYA. Residues 62 to 73 show a composition bias toward basic residues; it reads GGRKPFRQKGTG.

Belongs to the universal ribosomal protein uL4 family. Part of the 50S ribosomal subunit.

Functionally, one of the primary rRNA binding proteins, this protein initially binds near the 5'-end of the 23S rRNA. It is important during the early stages of 50S assembly. It makes multiple contacts with different domains of the 23S rRNA in the assembled 50S subunit and ribosome. Forms part of the polypeptide exit tunnel. The chain is Large ribosomal subunit protein uL4 from Corynebacterium efficiens (strain DSM 44549 / YS-314 / AJ 12310 / JCM 11189 / NBRC 100395).